Consider the following 301-residue polypeptide: MSNAALATAPHALELDVHPVAGRIGAEIRGVKLSPDLDAATVEAIQAALVRHKVIFFRGQTHLDDQSQEGFAKLLGEPVAHPTVPVVDGTRYLLQLDGAQGQRANSWHTDVTFVEAYPKASILRSVVAPASGGDTVWANTAAAYQELPEPLRELADKLWAVHSNEYDYASLKPDIDPAKLERHRKVFTSTVYETEHPVVRVHPISGERALQLGHFVKRIKGYSLADSQHLFAVLQGHVTRLENTVRWRWEAGDVAIWDNRATQHYAVDDYGTQPRIVRRVTLAGEVPVGVDGQLSRTTRKG.

His81 is a substrate binding site. Fe cation-binding residues include His108 and Asp110. Substrate is bound at residue Val111. Thr135 contributes to the 2-oxoglutarate binding site. Position 264 (His264) interacts with Fe cation. 2 residues coordinate 2-oxoglutarate: Arg275 and Arg279.

It belongs to the TfdA dioxygenase family. As to quaternary structure, homotetramer. Fe(2+) is required as a cofactor.

The catalysed reaction is a primary linear alkyl sulfate ester + 2-oxoglutarate + O2 = an aldehyde + sulfate + succinate + CO2 + H(+). It carries out the reaction 2-ethylhexyl sulfate + 2-oxoglutarate + O2 = 2-ethylhexanal + sulfate + succinate + CO2 + H(+). The enzyme catalyses decyl sulfate + 2-oxoglutarate + O2 = decanal + sulfate + succinate + CO2 + H(+). It catalyses the reaction hexyl sulfate + 2-oxoglutarate + O2 = hexanal + sulfate + succinate + CO2 + H(+). The catalysed reaction is nonyl sufate + 2-oxoglutarate + O2 = nonanal + sulfate + succinate + CO2 + H(+). Strongly stimulated by ascorbate. Catalyzes the oxygenolytic cleavage of 2-ethylhexyl sulfate (2-EHS) in the presence of alpha-ketoglutarate to yield 2-ethyl-hexanal and succinate, the decarboxylated form of alpha-ketoglutarate. It can accept a wide range of alpha-keto acids including 2-oxo-valerate, 2-oxo-adipate, 2-oxo-octanoate, 3-methyl-2-oxo-butyrate, oxaloacetate-alpha-ketoadipate, and alpha-ketooctanoate. It can catalyze the cleavage of medium-chain alkyl sulfate esters such as butylsulfate, pentylsulfate, hexylsulfate, heptylsulfate, octylsulfate, nonylsulfate, decylsulfate and sodium dodecyl sulfate (SDS). This chain is Alpha-ketoglutarate-dependent sulfate ester dioxygenase, found in Pseudomonas putida (Arthrobacter siderocapsulatus).